The sequence spans 193 residues: MSRSISKLRETKETKVEIFLDIDNKGEIEVSTPVNFFNHMLYTLLYYMNSTAKVNVVDRQNYDDHHVVEDTAITLGQAFKEVLGDKKGIRRFANTIIPMDDALVLVAVDISGRGVSNVEFKLKRNTIGDLAIENIYHFFSSFSYHSGVNLHVIQLRGKNTHHVLEASFKGLGMSLYEASRILFEEVRSLKGSL.

Belongs to the imidazoleglycerol-phosphate dehydratase family.

The protein resides in the cytoplasm. The enzyme catalyses D-erythro-1-(imidazol-4-yl)glycerol 3-phosphate = 3-(imidazol-4-yl)-2-oxopropyl phosphate + H2O. It participates in amino-acid biosynthesis; L-histidine biosynthesis; L-histidine from 5-phospho-alpha-D-ribose 1-diphosphate: step 6/9. This chain is Imidazoleglycerol-phosphate dehydratase, found in Sulfolobus acidocaldarius (strain ATCC 33909 / DSM 639 / JCM 8929 / NBRC 15157 / NCIMB 11770).